The following is a 589-amino-acid chain: Multidrug transporter FLR2 (589 aa).

The segment at 50 to 116 (KEEMKQDNQT…SSTKDASKPE (67 aa)) is disordered. Over residues 56–73 (DNQTSTDSMSTSTQQETD) the composition is skewed to low complexity. Residue Asn57 is glycosylated (N-linked (GlcNAc...) asparagine). Residues 107–116 (SSTKDASKPE) show a composition bias toward basic and acidic residues. An N-linked (GlcNAc...) asparagine glycan is attached at Asn136. 12 helical membrane-spanning segments follow: residues 143–163 (TFVI…SSIY), 179–199 (VVGT…PIIF), 211–231 (MPLY…CALV), 234–254 (IAGL…VLAT), 275–295 (WAVG…AMVV), 301–321 (WIFW…IFFF), 378–398 (PIIL…YLFF), 417–437 (GLAF…LIIF), 455–475 (LFLI…FFFG), 480–500 (IHWI…FNLF), 516–536 (ASVF…FPLF), and 551–571 (VAWG…IPFV).

This sequence belongs to the major facilitator superfamily.

The protein localises to the cell membrane. In terms of biological role, multidrug transporter that confers resistance to 5-flucytosine (5-FC) and clotrimazole. Further confers azole drug resistance. Plays direct roles in extrusion of 5-flucytosine and clotrimazole. The sequence is that of Multidrug transporter FLR2 from Candida glabrata (strain ATCC 2001 / BCRC 20586 / JCM 3761 / NBRC 0622 / NRRL Y-65 / CBS 138) (Yeast).